A 163-amino-acid chain; its full sequence is Lipoprotein signal peptidase (163 aa).

Transmembrane regions (helical) follow at residues 11-31 (ILIA…IATT), 63-83 (KMTF…YFFI), and 88-108 (YNLF…GNFI). Residues Asp118 and Asp136 contribute to the active site. Residues 131–151 (IFNIADSSLTIGVILIIIALL) traverse the membrane as a helical segment.

This sequence belongs to the peptidase A8 family.

Its subcellular location is the cell membrane. It carries out the reaction Release of signal peptides from bacterial membrane prolipoproteins. Hydrolyzes -Xaa-Yaa-Zaa-|-(S,diacylglyceryl)Cys-, in which Xaa is hydrophobic (preferably Leu), and Yaa (Ala or Ser) and Zaa (Gly or Ala) have small, neutral side chains.. Its pathway is protein modification; lipoprotein biosynthesis (signal peptide cleavage). This protein specifically catalyzes the removal of signal peptides from prolipoproteins. The chain is Lipoprotein signal peptidase from Staphylococcus aureus.